The primary structure comprises 232 residues: Orotidine 5'-phosphate decarboxylase (232 aa).

Substrate-binding positions include Asp11, Lys33, 60–69, Thr119, Arg180, Gln189, Gly209, and Arg210; that span reads DLKFHDIPHT. The active-site Proton donor is Lys62.

Belongs to the OMP decarboxylase family. Type 1 subfamily. Homodimer.

The enzyme catalyses orotidine 5'-phosphate + H(+) = UMP + CO2. The protein operates within pyrimidine metabolism; UMP biosynthesis via de novo pathway; UMP from orotate: step 2/2. Catalyzes the decarboxylation of orotidine 5'-monophosphate (OMP) to uridine 5'-monophosphate (UMP). The chain is Orotidine 5'-phosphate decarboxylase from Nitrosococcus oceani (strain ATCC 19707 / BCRC 17464 / JCM 30415 / NCIMB 11848 / C-107).